We begin with the raw amino-acid sequence, 101 residues long: A-type ATP synthase subunit K (101 aa).

3 helical membrane-spanning segments follow: residues 5-25 (WLPFLLLPLLVSATIFSAQAP), 37-57 (IGAGLAIGLAAIGAGVAVGMA), and 75-95 (ILIFVAIGEGIAVYGILFAVL).

The protein belongs to the V-ATPase proteolipid subunit family. As to quaternary structure, has multiple subunits with at least A(3), B(3), C, D, E, F, H, I and proteolipid K(x). Post-translationally, the N-terminus is blocked.

The protein resides in the cell membrane. Component of the A-type ATP synthase that produces ATP from ADP in the presence of a proton gradient across the membrane. The polypeptide is A-type ATP synthase subunit K (Sulfurisphaera tokodaii (strain DSM 16993 / JCM 10545 / NBRC 100140 / 7) (Sulfolobus tokodaii)).